A 156-amino-acid chain; its full sequence is ATP synthase subunit b (156 aa).

The chain crosses the membrane as a helical span at residues 7–27; it reads LFAQMIVFFVLWWVVARFVWP.

Belongs to the ATPase B chain family. F-type ATPases have 2 components, F(1) - the catalytic core - and F(0) - the membrane proton channel. F(1) has five subunits: alpha(3), beta(3), gamma(1), delta(1), epsilon(1). F(0) has three main subunits: a(1), b(2) and c(10-14). The alpha and beta chains form an alternating ring which encloses part of the gamma chain. F(1) is attached to F(0) by a central stalk formed by the gamma and epsilon chains, while a peripheral stalk is formed by the delta and b chains.

Its subcellular location is the cell inner membrane. Its function is as follows. F(1)F(0) ATP synthase produces ATP from ADP in the presence of a proton or sodium gradient. F-type ATPases consist of two structural domains, F(1) containing the extramembraneous catalytic core and F(0) containing the membrane proton channel, linked together by a central stalk and a peripheral stalk. During catalysis, ATP synthesis in the catalytic domain of F(1) is coupled via a rotary mechanism of the central stalk subunits to proton translocation. In terms of biological role, component of the F(0) channel, it forms part of the peripheral stalk, linking F(1) to F(0). The chain is ATP synthase subunit b from Polynucleobacter necessarius subsp. necessarius (strain STIR1).